We begin with the raw amino-acid sequence, 125 residues long: Small ribosomal subunit protein eS6 (125 aa).

This sequence belongs to the eukaryotic ribosomal protein eS6 family.

This is Small ribosomal subunit protein eS6 from Thermococcus onnurineus (strain NA1).